A 305-amino-acid polypeptide reads, in one-letter code: Putative S-adenosyl-L-methionine-dependent methyltransferase MAB_4607c (305 aa).

S-adenosyl-L-methionine is bound by residues Asp128 and 155–156; that span reads DL.

It belongs to the UPF0677 family.

In terms of biological role, exhibits S-adenosyl-L-methionine-dependent methyltransferase activity. This is Putative S-adenosyl-L-methionine-dependent methyltransferase MAB_4607c from Mycobacteroides abscessus (strain ATCC 19977 / DSM 44196 / CCUG 20993 / CIP 104536 / JCM 13569 / NCTC 13031 / TMC 1543 / L948) (Mycobacterium abscessus).